Consider the following 456-residue polypeptide: MLHLYNSLTRKKEPFVSLKPGTIGMYVCGITVYDHCHLGHARSMVAFDVMVRYLRSQGFDVTYVRNITDIDDKIIARASERGVSIDELTAQYIDAMNNDTHALNILPPDHEPRATGHIETIIRLIQRLLEKGNAYVSENGDVCYEVDTFPEYGKLSHKDIEGLVSGSRVEIVKEKRSPLDFVLWKKAKPGEPSWPSPWGEGRPGWHIECSAMAMHELGEQFDIHGGGLDLQFPHHENEIAQSEAATGKPFANYWLHVGMLQVNGEKMAKSIGNFYTIADVLKEHHPEVIRYFLLSSHYRSPLNYSEENLLNAKKALIRLYQAVKDVPPQTEDSKLDEYWQVQFNQAMNDDFNTPVALSVLFQLAHEVNKSNSPALAHTLKNLAGILGFLQKDPESFLQSGLAEEEKLVIEQLIAERLQARAERNWAKADQIRADLLSKGIELEDGATGTTWRRIAE.

Cys28 serves as a coordination point for Zn(2+). A 'HIGH' region motif is present at residues 30 to 40 (ITVYDHCHLGH). Zn(2+) is bound by residues Cys209, His234, and Glu238. A 'KMSKS' region motif is present at residues 266 to 270 (KMAKS). Lys269 contributes to the ATP binding site.

This sequence belongs to the class-I aminoacyl-tRNA synthetase family. As to quaternary structure, monomer. Zn(2+) serves as cofactor.

The protein resides in the cytoplasm. It catalyses the reaction tRNA(Cys) + L-cysteine + ATP = L-cysteinyl-tRNA(Cys) + AMP + diphosphate. The sequence is that of Cysteine--tRNA ligase from Legionella pneumophila subsp. pneumophila (strain Philadelphia 1 / ATCC 33152 / DSM 7513).